Here is a 246-residue protein sequence, read N- to C-terminus: Small ribosomal subunit protein uS2 (246 aa).

This sequence belongs to the universal ribosomal protein uS2 family.

The sequence is that of Small ribosomal subunit protein uS2 from Burkholderia cenocepacia (strain ATCC BAA-245 / DSM 16553 / LMG 16656 / NCTC 13227 / J2315 / CF5610) (Burkholderia cepacia (strain J2315)).